The following is a 355-amino-acid chain: Guanine nucleotide-binding protein subunit alpha-14 (355 aa).

The G-alpha domain maps to 34 to 355 (RELKLLLLGT…QLNLREFNLV (322 aa)). Positions 37-50 (KLLLLGTGESGKST) are G1 motif. GTP is bound by residues 42–49 (GTGESGKS), 176–182 (LRVRVPT), 201–205 (DVGGQ), 270–273 (NKKD), and A327. Mg(2+) is bound at residue S49. The G2 motif stretch occupies residues 174 to 182 (DVLRVRVPT). R179 carries the ADP-ribosylarginine; by cholera toxin modification. Position 182 (T182) interacts with Mg(2+). Residues 197-206 (FRMVDVGGQR) are G3 motif. Positions 266–273 (ILFLNKKD) are G4 motif. The interval 325 to 330 (TCATDT) is G5 motif.

Belongs to the G-alpha family. G(q) subfamily. G proteins are composed of 3 units; alpha, beta and gamma. The alpha chain contains the guanine nucleotide binding site.

In terms of biological role, guanine nucleotide-binding proteins (G proteins) are involved as modulators or transducers in various transmembrane signaling systems. This is Guanine nucleotide-binding protein subunit alpha-14 (GNA14) from Homo sapiens (Human).